The primary structure comprises 246 residues: tRNA pseudouridine synthase A (246 aa).

Asp-52 (nucleophile) is an active-site residue. Tyr-111 contacts substrate.

The protein belongs to the tRNA pseudouridine synthase TruA family. As to quaternary structure, homodimer.

It carries out the reaction uridine(38/39/40) in tRNA = pseudouridine(38/39/40) in tRNA. In terms of biological role, formation of pseudouridine at positions 38, 39 and 40 in the anticodon stem and loop of transfer RNAs. The protein is tRNA pseudouridine synthase A of Ehrlichia ruminantium (strain Gardel).